We begin with the raw amino-acid sequence, 218 residues long: Pyridoxine/pyridoxamine 5'-phosphate oxidase (218 aa).

Residues 14-17 (RREY) and K72 each bind substrate. FMN is bound by residues 67-72 (RIVLLK), 82-83 (YT), R88, K89, and Q111. Residues Y129, R133, and S137 each contribute to the substrate site. FMN-binding positions include 146 to 147 (QS) and W191. 197–199 (RLH) is a substrate binding site. R201 serves as a coordination point for FMN.

It belongs to the pyridoxamine 5'-phosphate oxidase family. In terms of assembly, homodimer. FMN is required as a cofactor.

It catalyses the reaction pyridoxamine 5'-phosphate + O2 + H2O = pyridoxal 5'-phosphate + H2O2 + NH4(+). It carries out the reaction pyridoxine 5'-phosphate + O2 = pyridoxal 5'-phosphate + H2O2. It participates in cofactor metabolism; pyridoxal 5'-phosphate salvage; pyridoxal 5'-phosphate from pyridoxamine 5'-phosphate: step 1/1. It functions in the pathway cofactor metabolism; pyridoxal 5'-phosphate salvage; pyridoxal 5'-phosphate from pyridoxine 5'-phosphate: step 1/1. In terms of biological role, catalyzes the oxidation of either pyridoxine 5'-phosphate (PNP) or pyridoxamine 5'-phosphate (PMP) into pyridoxal 5'-phosphate (PLP). In Escherichia coli (strain SMS-3-5 / SECEC), this protein is Pyridoxine/pyridoxamine 5'-phosphate oxidase.